We begin with the raw amino-acid sequence, 257 residues long: Acetylglutamate kinase (257 aa).

Substrate is bound by residues 43-44 (GG), Arg65, and Asn157. ATP-binding positions include 180–185 (DVSGIL) and 208–210 (IIT).

Belongs to the acetylglutamate kinase family. ArgB subfamily. In terms of assembly, homodimer.

Its subcellular location is the cytoplasm. The enzyme catalyses N-acetyl-L-glutamate + ATP = N-acetyl-L-glutamyl 5-phosphate + ADP. It functions in the pathway amino-acid biosynthesis; L-arginine biosynthesis; N(2)-acetyl-L-ornithine from L-glutamate: step 2/4. Functionally, catalyzes the ATP-dependent phosphorylation of N-acetyl-L-glutamate. The protein is Acetylglutamate kinase of Escherichia coli O139:H28 (strain E24377A / ETEC).